A 393-amino-acid polypeptide reads, in one-letter code: CCA-adding enzyme (393 aa).

2 residues coordinate ATP: G27 and R30. G27 and R30 together coordinate CTP. Mg(2+) is bound by residues D40 and D42. R111, D154, R157, R160, and R163 together coordinate ATP. 5 residues coordinate CTP: R111, D154, R157, R160, and R163.

It belongs to the tRNA nucleotidyltransferase/poly(A) polymerase family. Bacterial CCA-adding enzyme type 3 subfamily. In terms of assembly, homodimer. Requires Mg(2+) as cofactor.

The catalysed reaction is a tRNA precursor + 2 CTP + ATP = a tRNA with a 3' CCA end + 3 diphosphate. It catalyses the reaction a tRNA with a 3' CCA end + 2 CTP + ATP = a tRNA with a 3' CCACCA end + 3 diphosphate. Its function is as follows. Catalyzes the addition and repair of the essential 3'-terminal CCA sequence in tRNAs without using a nucleic acid template. Adds these three nucleotides in the order of C, C, and A to the tRNA nucleotide-73, using CTP and ATP as substrates and producing inorganic pyrophosphate. tRNA 3'-terminal CCA addition is required both for tRNA processing and repair. Also involved in tRNA surveillance by mediating tandem CCA addition to generate a CCACCA at the 3' terminus of unstable tRNAs. While stable tRNAs receive only 3'-terminal CCA, unstable tRNAs are marked with CCACCA and rapidly degraded. The polypeptide is CCA-adding enzyme (Listeria monocytogenes serotype 4b (strain F2365)).